Consider the following 103-residue polypeptide: Histone H4, major (103 aa).

The span at 1–12 (MAGGKGGKGMGK) shows a compositional bias: gly residues. The disordered stretch occupies residues 1 to 29 (MAGGKGGKGMGKVGAKRHSKRSNKASIEG). Residues K5, K8, K12, and K16 each carry the N6-acetyllysine modification. Over residues 14-23 (GAKRHSKRSN) the composition is skewed to basic residues. Residues 16–21 (KRHSKR) mediate DNA binding.

It belongs to the histone H4 family. In terms of assembly, the nucleosome is a histone octamer containing two molecules each of H2A, H2B, H3 and H4 assembled in one H3-H4 heterotetramer and two H2A-H2B heterodimers. The octamer wraps approximately 147 bp of DNA.

Its subcellular location is the nucleus. The protein resides in the chromosome. Its function is as follows. Core component of nucleosome. Nucleosomes wrap and compact DNA into chromatin, limiting DNA accessibility to the cellular machineries which require DNA as a template. Histones thereby play a central role in transcription regulation, DNA repair, DNA replication and chromosomal stability. DNA accessibility is regulated via a complex set of post-translational modifications of histones, also called histone code, and nucleosome remodeling. This is Histone H4, major from Tetrahymena pyriformis.